A 200-amino-acid polypeptide reads, in one-letter code: dITP/XTP pyrophosphatase (200 aa).

Threonine 7–lysine 12 contacts substrate. Mg(2+) contacts are provided by glutamate 38 and aspartate 73. Aspartate 73 serves as the catalytic Proton acceptor. Residues serine 74, phenylalanine 154–aspartate 157, lysine 177, and histidine 182–arginine 183 contribute to the substrate site.

The protein belongs to the HAM1 NTPase family. In terms of assembly, homodimer. The cofactor is Mg(2+).

The catalysed reaction is XTP + H2O = XMP + diphosphate + H(+). It catalyses the reaction dITP + H2O = dIMP + diphosphate + H(+). It carries out the reaction ITP + H2O = IMP + diphosphate + H(+). Its function is as follows. Pyrophosphatase that catalyzes the hydrolysis of nucleoside triphosphates to their monophosphate derivatives, with a high preference for the non-canonical purine nucleotides XTP (xanthosine triphosphate), dITP (deoxyinosine triphosphate) and ITP. Seems to function as a house-cleaning enzyme that removes non-canonical purine nucleotides from the nucleotide pool, thus preventing their incorporation into DNA/RNA and avoiding chromosomal lesions. The polypeptide is dITP/XTP pyrophosphatase (Campylobacter jejuni subsp. jejuni serotype O:6 (strain 81116 / NCTC 11828)).